A 305-amino-acid chain; its full sequence is UDP-3-O-acyl-N-acetylglucosamine deacetylase (305 aa).

The Zn(2+) site is built by His79, His238, and Asp242. His265 serves as the catalytic Proton donor.

This sequence belongs to the LpxC family. It depends on Zn(2+) as a cofactor.

It carries out the reaction a UDP-3-O-[(3R)-3-hydroxyacyl]-N-acetyl-alpha-D-glucosamine + H2O = a UDP-3-O-[(3R)-3-hydroxyacyl]-alpha-D-glucosamine + acetate. It functions in the pathway glycolipid biosynthesis; lipid IV(A) biosynthesis; lipid IV(A) from (3R)-3-hydroxytetradecanoyl-[acyl-carrier-protein] and UDP-N-acetyl-alpha-D-glucosamine: step 2/6. In terms of biological role, catalyzes the hydrolysis of UDP-3-O-myristoyl-N-acetylglucosamine to form UDP-3-O-myristoylglucosamine and acetate, the committed step in lipid A biosynthesis. This is UDP-3-O-acyl-N-acetylglucosamine deacetylase from Haemophilus influenzae (strain PittEE).